A 156-amino-acid chain; its full sequence is ATP synthase subunit b (156 aa).

A helical transmembrane segment spans residues 7–29 (LLGQAISFLLFVWFCMKFVWPPL).

This sequence belongs to the ATPase B chain family. F-type ATPases have 2 components, F(1) - the catalytic core - and F(0) - the membrane proton channel. F(1) has five subunits: alpha(3), beta(3), gamma(1), delta(1), epsilon(1). F(0) has three main subunits: a(1), b(2) and c(10-14). The alpha and beta chains form an alternating ring which encloses part of the gamma chain. F(1) is attached to F(0) by a central stalk formed by the gamma and epsilon chains, while a peripheral stalk is formed by the delta and b chains.

Its subcellular location is the cell inner membrane. In terms of biological role, f(1)F(0) ATP synthase produces ATP from ADP in the presence of a proton or sodium gradient. F-type ATPases consist of two structural domains, F(1) containing the extramembraneous catalytic core and F(0) containing the membrane proton channel, linked together by a central stalk and a peripheral stalk. During catalysis, ATP synthesis in the catalytic domain of F(1) is coupled via a rotary mechanism of the central stalk subunits to proton translocation. Its function is as follows. Component of the F(0) channel, it forms part of the peripheral stalk, linking F(1) to F(0). This is ATP synthase subunit b from Shewanella pealeana (strain ATCC 700345 / ANG-SQ1).